The chain runs to 437 residues: Elongation factor 1-gamma-B (437 aa).

Residues 2–87 (AGGTLYTYPD…YVANDELRGS (86 aa)) enclose the GST N-terminal domain. Residues 89-222 (NRLHQAQVIQ…KMAQFDAKKF (134 aa)) enclose the GST C-terminal domain. The span at 225–240 (VQPKKETPKKEKPAKE) shows a compositional bias: basic and acidic residues. A disordered region spans residues 225 to 279 (VQPKKETPKKEKPAKEPKKKKKKKKKATPAPAPAPEDDLDESEKALAAEPKSKDP). Basic residues predominate over residues 241–251 (PKKKKKKKKKA). The span at 266 to 279 (SEKALAAEPKSKDP) shows a compositional bias: basic and acidic residues. Residues 276 to 437 (SKDPYAHLPK…KAFNQGKIFK (162 aa)) enclose the EF-1-gamma C-terminal domain.

As to quaternary structure, EF-1 is composed of four subunits: alpha, beta, delta, and gamma.

In terms of biological role, probably plays a role in anchoring the complex to other cellular components. This chain is Elongation factor 1-gamma-B (eef1g-b), found in Xenopus laevis (African clawed frog).